The chain runs to 138 residues: Phosphoribosyl-AMP cyclohydrolase (138 aa).

Mg(2+) is bound at residue Asp-84. Cys-85 serves as a coordination point for Zn(2+). Mg(2+) contacts are provided by Asp-86 and Asp-88. The Zn(2+) site is built by Cys-102 and Cys-109.

It belongs to the PRA-CH family. As to quaternary structure, homodimer. It depends on Mg(2+) as a cofactor. Zn(2+) is required as a cofactor.

Its subcellular location is the cytoplasm. It carries out the reaction 1-(5-phospho-beta-D-ribosyl)-5'-AMP + H2O = 1-(5-phospho-beta-D-ribosyl)-5-[(5-phospho-beta-D-ribosylamino)methylideneamino]imidazole-4-carboxamide. Its pathway is amino-acid biosynthesis; L-histidine biosynthesis; L-histidine from 5-phospho-alpha-D-ribose 1-diphosphate: step 3/9. Catalyzes the hydrolysis of the adenine ring of phosphoribosyl-AMP. The polypeptide is Phosphoribosyl-AMP cyclohydrolase (Burkholderia cenocepacia (strain ATCC BAA-245 / DSM 16553 / LMG 16656 / NCTC 13227 / J2315 / CF5610) (Burkholderia cepacia (strain J2315))).